A 646-amino-acid chain; its full sequence is Pentatricopeptide repeat-containing protein At5g48910 (646 aa).

The tract at residues 1-24 (MNPTQTLFSPGGNSPASSPASHPS) is disordered. Positions 9 to 24 (SPGGNSPASSPASHPS) are enriched in low complexity. 11 PPR repeats span residues 54-88 (DTLA…MPQR), 89-126 (NCFS…FVEP), 127-161 (NRFT…GFGG), 162-197 (DEFV…DMVV), 207-237 (EIVL…MRQR), 238-272 (SVVS…DIRP), 273-307 (NYVT…GIRI), 308-338 (DDVL…LPRE), 339-373 (NVIT…GVRP), 374-409 (SDVA…GLEP), and 410-440 (RIEH…MPIK). Residues 445–520 (IWKALLGACR…DPGCSLIDID (76 aa)) are type E motif. The type E(+) motif stretch occupies residues 521-551 (GVLHEFVVEDDSHPKAKEINSMLVEISDKLR). Residues 552-646 (LAGYRPITTQ…DGSCSCMDYW (95 aa)) form a type DYW motif region.

It belongs to the PPR family. PCMP-H subfamily.

The polypeptide is Pentatricopeptide repeat-containing protein At5g48910 (PCMP-H38) (Arabidopsis thaliana (Mouse-ear cress)).